The primary structure comprises 259 residues: Proteasome subunit alpha (259 aa).

This sequence belongs to the peptidase T1A family. In terms of assembly, the 20S proteasome core is composed of 14 alpha and 14 beta subunits that assemble into four stacked heptameric rings, resulting in a barrel-shaped structure. The two inner rings, each composed of seven catalytic beta subunits, are sandwiched by two outer rings, each composed of seven alpha subunits. The catalytic chamber with the active sites is on the inside of the barrel. Has a gated structure, the ends of the cylinder being occluded by the N-termini of the alpha-subunits. Is capped at one or both ends by the proteasome regulatory ATPase, PAN.

The protein localises to the cytoplasm. The formation of the proteasomal ATPase PAN-20S proteasome complex, via the docking of the C-termini of PAN into the intersubunit pockets in the alpha-rings, triggers opening of the gate for substrate entry. Interconversion between the open-gate and close-gate conformations leads to a dynamic regulation of the 20S proteasome proteolysis activity. Component of the proteasome core, a large protease complex with broad specificity involved in protein degradation. This chain is Proteasome subunit alpha, found in Methanococcus maripaludis (strain DSM 14266 / JCM 13030 / NBRC 101832 / S2 / LL).